The chain runs to 223 residues: ATP-dependent Clp protease proteolytic subunit 2 (223 aa).

Residues 1–40 form a disordered region; that stretch reads MHAGSGNDMDITRMTPTRLDDEPDAPEPETREDDNKTLNS. Acidic residues predominate over residues 21–32; sequence DEPDAPEPETRE. Serine 124 functions as the Nucleophile in the catalytic mechanism. Histidine 149 is an active-site residue.

It belongs to the peptidase S14 family. In terms of assembly, fourteen ClpP subunits assemble into 2 heptameric rings which stack back to back to give a disk-like structure with a central cavity, resembling the structure of eukaryotic proteasomes.

Its subcellular location is the cytoplasm. It carries out the reaction Hydrolysis of proteins to small peptides in the presence of ATP and magnesium. alpha-casein is the usual test substrate. In the absence of ATP, only oligopeptides shorter than five residues are hydrolyzed (such as succinyl-Leu-Tyr-|-NHMec, and Leu-Tyr-Leu-|-Tyr-Trp, in which cleavage of the -Tyr-|-Leu- and -Tyr-|-Trp bonds also occurs).. Its function is as follows. Cleaves peptides in various proteins in a process that requires ATP hydrolysis. Has a chymotrypsin-like activity. Plays a major role in the degradation of misfolded proteins. The protein is ATP-dependent Clp protease proteolytic subunit 2 of Gluconobacter oxydans (strain 621H) (Gluconobacter suboxydans).